The primary structure comprises 102 residues: Large ribosomal subunit protein bL21 (102 aa).

It belongs to the bacterial ribosomal protein bL21 family. As to quaternary structure, part of the 50S ribosomal subunit. Contacts protein L20.

In terms of biological role, this protein binds to 23S rRNA in the presence of protein L20. This chain is Large ribosomal subunit protein bL21, found in Ligilactobacillus salivarius (strain UCC118) (Lactobacillus salivarius).